Here is a 793-residue protein sequence, read N- to C-terminus: Neurobeachin (793 aa).

Disordered regions lie at residues 68 to 92 (ENIK…TGAK) and 685 to 793 (RETA…EILK). Polar residues-rich tracts occupy residues 77 to 90 (NVST…QTTG), 689 to 710 (RSGS…STET), 750 to 762 (NILN…TSTG), and 782 to 793 (ESLTESPSEILK).

This sequence belongs to the WD repeat neurobeachin family. As to quaternary structure, interacts with RII subunit of PKA. In terms of tissue distribution, forebrain and cerebellum.

It is found in the cytoplasm. It localises to the membrane. Its function is as follows. Binds to type II regulatory subunits of protein kinase A and anchors/targets them to the membrane. May anchor the kinase to cytoskeletal and/or organelle-associated proteins. The protein is Neurobeachin (NBEA) of Gallus gallus (Chicken).